A 297-amino-acid chain; its full sequence is uncharacterized protein (297 aa).

A run of 9 helical transmembrane segments spans residues 1-21 (MSWI…LGII), 32-52 (GSIL…IYVY), 72-92 (AMAL…NIPS), 98-118 (VLFF…YGGI), 120-140 (LIHK…ATGI), 194-214 (ILIE…IFAI), 218-238 (VYII…LFFC), 253-273 (LALI…IEIP), and 274-294 (AYIS…ASIL).

This sequence belongs to the TerC family.

The protein localises to the cell membrane. This is an uncharacterized protein from Rickettsia prowazekii (strain Madrid E).